A 123-amino-acid chain; its full sequence is Small ribosomal subunit protein uS12 (123 aa).

Position 89 is a 3-methylthioaspartic acid (D89).

It belongs to the universal ribosomal protein uS12 family. Part of the 30S ribosomal subunit. Contacts proteins S8 and S17. May interact with IF1 in the 30S initiation complex.

Its function is as follows. With S4 and S5 plays an important role in translational accuracy. Functionally, interacts with and stabilizes bases of the 16S rRNA that are involved in tRNA selection in the A site and with the mRNA backbone. Located at the interface of the 30S and 50S subunits, it traverses the body of the 30S subunit contacting proteins on the other side and probably holding the rRNA structure together. The combined cluster of proteins S8, S12 and S17 appears to hold together the shoulder and platform of the 30S subunit. In Geobacter metallireducens (strain ATCC 53774 / DSM 7210 / GS-15), this protein is Small ribosomal subunit protein uS12.